The chain runs to 187 residues: 1,6-anhydro-N-acetylmuramyl-L-alanine amidase AmpD (187 aa).

One can recognise an N-acetylmuramoyl-L-alanine amidase domain in the interval 30–167 (LLVVHNISLP…APERKTDPGP (138 aa)). H34 serves as a coordination point for Zn(2+). Residue E116 is the Proton acceptor of the active site. Positions 154 and 164 each coordinate Zn(2+).

It belongs to the N-acetylmuramoyl-L-alanine amidase 2 family. It depends on Zn(2+) as a cofactor.

The protein resides in the cytoplasm. It catalyses the reaction Hydrolyzes the link between N-acetylmuramoyl residues and L-amino acid residues in certain cell-wall glycopeptides.. Amidase activity is inhibited by metal chelators such as EDTA, dipicolinic acid or 1,10-phenanthroline. Functionally, involved in cell wall peptidoglycan recycling. Specifically cleaves the amide bond between the lactyl group of N-acetylmuramic acid and the alpha-amino group of the L-alanine in degradation products containing an anhydro N-acetylmuramyl moiety. Is also involved in beta-lactamase induction. This is 1,6-anhydro-N-acetylmuramyl-L-alanine amidase AmpD from Citrobacter freundii.